We begin with the raw amino-acid sequence, 253 residues long: Sulfate transporter CysZ (253 aa).

The next 4 membrane-spanning stretches (helical) occupy residues 31–51, 75–95, 151–171, and 222–242; these read FVIL…WWLF, LLWP…FSTI, IVLL…PVLW, and IPLL…AMWV.

The protein belongs to the CysZ family.

It is found in the cell inner membrane. High affinity, high specificity proton-dependent sulfate transporter, which mediates sulfate uptake. Provides the sulfur source for the cysteine synthesis pathway. This chain is Sulfate transporter CysZ, found in Shigella dysenteriae serotype 1 (strain Sd197).